Here is a 325-residue protein sequence, read N- to C-terminus: Probable cell division protein WhiA (325 aa).

Residues 280-313 (SLKELGNMLEKPLGKSGVNHRLRKIDKIAEELRK) constitute a DNA-binding region (H-T-H motif).

It belongs to the WhiA family.

In terms of biological role, involved in cell division and chromosome segregation. The chain is Probable cell division protein WhiA from Caldicellulosiruptor bescii (strain ATCC BAA-1888 / DSM 6725 / KCTC 15123 / Z-1320) (Anaerocellum thermophilum).